We begin with the raw amino-acid sequence, 607 residues long: Phosphogluconate dehydratase (607 aa).

Cysteine 156 and cysteine 223 together coordinate [4Fe-4S] cluster.

It belongs to the IlvD/Edd family. [4Fe-4S] cluster serves as cofactor.

The catalysed reaction is 6-phospho-D-gluconate = 2-dehydro-3-deoxy-6-phospho-D-gluconate + H2O. It functions in the pathway carbohydrate metabolism; Entner-Doudoroff pathway. Functionally, catalyzes the dehydration of 6-phospho-D-gluconate to 2-dehydro-3-deoxy-6-phospho-D-gluconate. This is Phosphogluconate dehydratase from Zymomonas mobilis subsp. mobilis (strain ATCC 31821 / ZM4 / CP4).